A 341-amino-acid polypeptide reads, in one-letter code: Glycerol-3-phosphate dehydrogenase [NAD(P)+] (341 aa).

NADPH contacts are provided by Ser14, Phe15, Arg35, and Lys108. Sn-glycerol 3-phosphate contacts are provided by Lys108 and Gly136. Ala140 is a binding site for NADPH. Sn-glycerol 3-phosphate-binding residues include Lys191, Asp244, Ser254, Arg255, and Asn256. Lys191 acts as the Proton acceptor in catalysis. Arg255 provides a ligand contact to NADPH. Residues Val279 and Glu281 each contribute to the NADPH site.

The protein belongs to the NAD-dependent glycerol-3-phosphate dehydrogenase family.

It localises to the cytoplasm. It carries out the reaction sn-glycerol 3-phosphate + NAD(+) = dihydroxyacetone phosphate + NADH + H(+). The catalysed reaction is sn-glycerol 3-phosphate + NADP(+) = dihydroxyacetone phosphate + NADPH + H(+). It participates in membrane lipid metabolism; glycerophospholipid metabolism. In terms of biological role, catalyzes the reduction of the glycolytic intermediate dihydroxyacetone phosphate (DHAP) to sn-glycerol 3-phosphate (G3P), the key precursor for phospholipid synthesis. This is Glycerol-3-phosphate dehydrogenase [NAD(P)+] from Pseudomonas putida (strain ATCC 47054 / DSM 6125 / CFBP 8728 / NCIMB 11950 / KT2440).